We begin with the raw amino-acid sequence, 557 residues long: Dihydroxy-acid dehydratase (557 aa).

C49 contributes to the [2Fe-2S] cluster binding site. D81 serves as a coordination point for Mg(2+). C122 is a [2Fe-2S] cluster binding site. Residues D123 and K124 each coordinate Mg(2+). An N6-carboxylysine modification is found at K124. Residue C194 participates in [2Fe-2S] cluster binding. Residue E446 coordinates Mg(2+). The active-site Proton acceptor is the S472.

Belongs to the IlvD/Edd family. As to quaternary structure, homodimer. The cofactor is [2Fe-2S] cluster. Requires Mg(2+) as cofactor.

It carries out the reaction (2R)-2,3-dihydroxy-3-methylbutanoate = 3-methyl-2-oxobutanoate + H2O. It catalyses the reaction (2R,3R)-2,3-dihydroxy-3-methylpentanoate = (S)-3-methyl-2-oxopentanoate + H2O. The protein operates within amino-acid biosynthesis; L-isoleucine biosynthesis; L-isoleucine from 2-oxobutanoate: step 3/4. It participates in amino-acid biosynthesis; L-valine biosynthesis; L-valine from pyruvate: step 3/4. Its function is as follows. Functions in the biosynthesis of branched-chain amino acids. Catalyzes the dehydration of (2R,3R)-2,3-dihydroxy-3-methylpentanoate (2,3-dihydroxy-3-methylvalerate) into 2-oxo-3-methylpentanoate (2-oxo-3-methylvalerate) and of (2R)-2,3-dihydroxy-3-methylbutanoate (2,3-dihydroxyisovalerate) into 2-oxo-3-methylbutanoate (2-oxoisovalerate), the penultimate precursor to L-isoleucine and L-valine, respectively. The protein is Dihydroxy-acid dehydratase of Prochlorococcus marinus (strain MIT 9301).